Consider the following 339-residue polypeptide: Coproporphyrin III ferrochelatase (339 aa).

Fe-coproporphyrin III-binding residues include Ser-52 and Tyr-121. His-181 and Glu-264 together coordinate Fe(2+).

It belongs to the ferrochelatase family.

It is found in the cytoplasm. It catalyses the reaction Fe-coproporphyrin III + 2 H(+) = coproporphyrin III + Fe(2+). It participates in porphyrin-containing compound metabolism; protoheme biosynthesis. In terms of biological role, involved in coproporphyrin-dependent heme b biosynthesis. Catalyzes the insertion of ferrous iron into coproporphyrin III to form Fe-coproporphyrin III. This chain is Coproporphyrin III ferrochelatase, found in Mycolicibacterium vanbaalenii (strain DSM 7251 / JCM 13017 / BCRC 16820 / KCTC 9966 / NRRL B-24157 / PYR-1) (Mycobacterium vanbaalenii).